A 170-amino-acid chain; its full sequence is Cathelicidin antimicrobial peptide (170 aa).

The first 30 residues, 1 to 30 (MKTQRDGPSLGRWSLLLLLLGLTMPLAVIG), serve as a signal peptide directing secretion. The propeptide at 31–131 (RVLSYQEAVL…DISCDKDKRK (101 aa)) is cathelin-like domain (CLD). The tract at residues 31 to 131 (RVLSYQEAVL…DISCDKDKRK (101 aa)) is cathelin-like domain (CLD). Disulfide bonds link C86–C97 and C108–C125. The active core stretch occupies residues 150–162 (LKKIGQKIKDFFG).

The protein belongs to the cathelicidin family. Monomer, homodimer or homotrimer (in vitro). Oligomerizes as tetra- or hexamer in solution (in vitro). Post-translationally, proteolytically cleaved by proteinase PRTN3 into antibacterial peptide LL-37. Proteolytically cleaved by cathepsin CTSG and neutrophil elastase ELANE. Resistant to proteolytic degradation in solution, and when bound to both zwitterionic (mimicking mammalian membranes) and negatively charged membranes (mimicking bacterial membranes). In terms of processing, after secretion onto the skin surface, the CAMP gene product is processed by a serine protease-dependent mechanism into multiple novel antimicrobial peptides distinct from and shorter than cathelicidin LL-37. These peptides show enhanced antimicrobial action, acquiring the ability to kill skin pathogens such as S.aureus, E.coli and C.albicans. These peptides have lost the ability to stimulate CXCL8/IL8 release from keratinocytes. The peptides act synergistically, killing bacteria at lower concentrations when present together, and maintain activity at increased salt condition.

Its subcellular location is the secreted. It is found in the vesicle. Its function is as follows. Antimicrobial protein that is an integral component of the innate immune system. Binds to bacterial lipopolysaccharides (LPS). Acts via neutrophil N-formyl peptide receptors to enhance the release of CXCL2. Postsecretory processing generates multiple cathelicidin antimicrobial peptides with various lengths which act as a topical antimicrobial defense in sweat on skin. The unprocessed precursor form, cathelicidin antimicrobial peptide, inhibits the growth of Gram-negative E.coli and E.aerogenes with efficiencies comparable to that of the mature peptide LL-37 (in vitro). Functionally, antimicrobial peptide that is an integral component of the innate immune system. Binds to bacterial lipopolysaccharides (LPS). Causes membrane permeabilization by forming transmembrane pores (in vitro). Causes lysis of E.coli. Exhibits antimicrobial activity against Gram-negative bacteria such as P.aeruginosa, S.typhimurium, E.aerogenes, E.coli and P.syringae, Gram-positive bacteria such as L.monocytogenes, S.epidermidis, S.pyogenes and S.aureus, as well as vancomycin-resistant enterococci (in vitro). Exhibits antimicrobial activity against methicillin-resistant S.aureus, P.mirabilis, and C.albicans in low-salt media, but not in media containing 100 mM NaCl (in vitro). Forms chiral supramolecular assemblies with quinolone signal (PQS) molecules of P.aeruginosa, which may lead to interference of bacterial quorum signaling and perturbance of bacterial biofilm formation. May form supramolecular fiber-like assemblies on bacterial membranes. Induces cytokine and chemokine producation as well as TNF/TNFA and CSF2/GMCSF production in normal human keratinocytes. Exhibits hemolytic activity against red blood cells. Exhibits antimicrobial activity against E.coli and B.megaterium (in vitro). This chain is Cathelicidin antimicrobial peptide, found in Saguinus oedipus (Cotton-top tamarin).